Consider the following 606-residue polypeptide: MTIKQLSETLINQIAAGEVIERPASAAKELIENALDAGATRIEIATAGGGKALLRVSDNGSGMEQADLELAIKRHCTSKISDTLDDIRTLGFRGEALPSIGSVARLSIASRRVGSAGGAEIAVAGGKVLHLRPAAANPGTIVEVRDLFFATPARLKFLKTEKAEAAAITEVVKRMAIAFPQVRFVLSGSDRSTLEFPATGDDRLARMAQVLGKDFKDNAIELDAEREDVRLTGFAGVPTFNRGNSAHQYAFVNGRPVQDKLILSAIRGAYAETIPSGRYPIAVLSITLDPALLDVNVHPAKSDVRFRDPGLVRGLIVGAIREALAREGDRAATTGADGMLRAFTSGFQPGWRPSAPSAPWTPEASPSRPYQPAVTNGYSFRERPQAAFDGLTMPTARAESTPFVEPTQSEEPARFPLGAARAQLHENYIVAQTDDGLVIVDQHAAHERLVFEEMRKALHSKRLSSQVLLIPEIVDLPEEDCDRLMVFADELGELGLAIERFGPGAIAVRETPAMLGEVDAQGLIRQLADEIAEWDTASGLAAKLEYVAATMACHGSVRSGRRLRPEEMNALLRQMEATPGSGQCNHGRPTYIELKLSDIERLFGRS.

The disordered stretch occupies residues 350-371; it reads GWRPSAPSAPWTPEASPSRPYQ.

The protein belongs to the DNA mismatch repair MutL/HexB family.

This protein is involved in the repair of mismatches in DNA. It is required for dam-dependent methyl-directed DNA mismatch repair. May act as a 'molecular matchmaker', a protein that promotes the formation of a stable complex between two or more DNA-binding proteins in an ATP-dependent manner without itself being part of a final effector complex. This is DNA mismatch repair protein MutL from Rhizobium rhizogenes (strain K84 / ATCC BAA-868) (Agrobacterium radiobacter).